The sequence spans 347 residues: Bifunctional methylenetetrahydrofolate dehydrogenase/cyclohydrolase 2, mitochondrial (347 aa).

Residues 98–102 (YVRNK) and 145–147 (VQL) each bind substrate. Residues 214-216 (GRS) and Arg-247 contribute to the NAD(+) site. 323-327 (PGGVG) is a substrate binding site.

Belongs to the tetrahydrofolate dehydrogenase/cyclohydrolase family. Mg(2+) is required as a cofactor.

Its subcellular location is the mitochondrion inner membrane. It catalyses the reaction (6R)-5,10-methylene-5,6,7,8-tetrahydrofolate + NAD(+) = (6R)-5,10-methenyltetrahydrofolate + NADH. It carries out the reaction (6R)-5,10-methenyltetrahydrofolate + H2O = (6R)-10-formyltetrahydrofolate + H(+). The enzyme catalyses (6R)-5,10-methylene-5,6,7,8-tetrahydrofolate + NADP(+) = (6R)-5,10-methenyltetrahydrofolate + NADPH. It functions in the pathway one-carbon metabolism; tetrahydrofolate interconversion. Its function is as follows. Bifunctional mitochondrial folate-interconverting enzyme that has both NAD/NADP-dependent methylenetetrahydrofolate dehydrogenase and methenyltetrahydrofolate cyclohydrolase activities. This is Bifunctional methylenetetrahydrofolate dehydrogenase/cyclohydrolase 2, mitochondrial from Callithrix jacchus (White-tufted-ear marmoset).